A 132-amino-acid chain; its full sequence is Small ribosomal subunit protein eS24 (132 aa).

The segment covering 90–100 (RLARHGLFEKK) has biased composition (basic and acidic residues). Positions 90 to 132 (RLARHGLFEKKKTSRKQRKERKNRMKKVRGTKKASVGASKKKD) are disordered. Positions 101-121 (KTSRKQRKERKNRMKKVRGTK) are enriched in basic residues.

Belongs to the eukaryotic ribosomal protein eS24 family. As to quaternary structure, component of the small ribosomal subunit.

The protein resides in the cytoplasm. Component of the small ribosomal subunit. The ribosome is a large ribonucleoprotein complex responsible for the synthesis of proteins in the cell. Required for processing of pre-rRNA and maturation of 40S ribosomal subunits. The polypeptide is Small ribosomal subunit protein eS24 (rps24) (Takifugu rubripes (Japanese pufferfish)).